The following is a 386-amino-acid chain: Latent membrane protein 1 (386 aa).

Over 2 to 23 the chain is Cytoplasmic; that stretch reads DLDLERGPPGPRRPPRGPPLSS. Residues 24–44 traverse the membrane as a helical segment; that stretch reads SIGLALLLLLLALLFWLYIIM. At 45–51 the chain is on the extracellular side; it reads SNWTGGA. Residues 52 to 72 form a helical membrane-spanning segment; sequence LLVLYAFALMLVIIILIIFIF. Residues 73-75 lie on the Cytoplasmic side of the membrane; sequence RRD. A helical membrane pass occupies residues 76 to 96; it reads LLCPLGALCLLLLMITLLLIA. Residues 97–106 lie on the Extracellular side of the membrane; sequence LWNLHGQALY. The chain crosses the membrane as a helical span at residues 107–127; it reads LGIVLFIFGCLLVLGLWIYLL. Residues 128–139 are Cytoplasmic-facing; it reads EILWRLGATIWQ. A helical membrane pass occupies residues 140–160; it reads LLAFFLAFFLDIILLIIALYL. Topologically, residues 161-163 are extracellular; the sequence is QQN. A helical membrane pass occupies residues 164 to 184; sequence WWTLLVDLLWLLLFLAILIWM. Topologically, residues 185-386 are cytoplasmic; it reads YYHGQRHSDE…HGPVQLSYYD (202 aa). Residues 194–232 form a CTAR1 region; it reads EHHHDDSLPHPQQATDDSSNQSDSNSNEGRHLLLVSGAG. The segment at 194–386 is disordered; sequence EHHHDDSLPH…HGPVQLSYYD (193 aa). Composition is skewed to low complexity over residues 209–220 and 251–267; these read DDSSNQSDSNSN and NGPQDPDNTDDNGPQDP. The interval 342–386 is CTAR2; the sequence is GGGGHSHDSGHDGIDPHLPTLLLGTSGSGGDDDDPHGPVQLSYYD. Over residues 346–356 the composition is skewed to basic and acidic residues; that stretch reads HSHDSGHDGID. Residues 357 to 366 are compositionally biased toward low complexity; the sequence is PHLPTLLLGT.

The protein belongs to the herpesviridae LMP-1 family. In terms of assembly, interacts (via PXQXT motif) with host tumor necrosis factor receptor-associated factor (TRAF) proteins TRAF1, TRAF2, TRAF3 and TRAF5. Interacts with TRAF3; this interaction activates B lymphocytes. Interacts with human protein ZMYND11; leading to negatively regulate NF-kappa-B activation. Interacts with host UBE2I; this interaction induces the sumoylation of various cellular proteins. Interacts with host IRF7. Interacts with host TYK2. Ubiquitinated on the N-terminus.

The protein resides in the host cell membrane. In terms of biological role, acts as a CD40 functional homolog to prevent apoptosis of infected B-lymphocytes and drive their proliferation. Functions as a constitutively active tumor necrosis factor receptor that induces the activation of several signaling pathways, including those of the NF-kappa-B family. LMP1 signaling leads to up-regulation of antiapoptotic proteins and provide growth signals in latently infected cells. Interacts with host UBE2I and subsequently affects the sumoylation state of several cellular proteins. For example, induces the sumoylation of host IRF7 thereby limiting its transcriptional activity and modulating the activation of innate immune responses. Also inhibits host IFN-alpha-stimulated STAT2 nuclear translocation and interferon-stimulated response element transcriptional activity by interacting with and inhibiting host TYK2. Induces SUMO expression during viral latency thereby dysregulating the host sumoylation processes. The chain is Latent membrane protein 1 (LMP1) from Homo sapiens (Human).